Consider the following 483-residue polypeptide: Probable Xaa-Pro aminopeptidase MCYG_06503 (483 aa).

Positions 233, 244, 409, and 453 each coordinate Mn(2+).

It belongs to the peptidase M24B family. It depends on Mn(2+) as a cofactor.

It catalyses the reaction Release of any N-terminal amino acid, including proline, that is linked to proline, even from a dipeptide or tripeptide.. Catalyzes the removal of a penultimate prolyl residue from the N-termini of peptides. The chain is Probable Xaa-Pro aminopeptidase MCYG_06503 from Arthroderma otae (strain ATCC MYA-4605 / CBS 113480) (Microsporum canis).